A 315-amino-acid chain; its full sequence is Homoserine kinase (315 aa).

An ATP-binding site is contributed by 97-107; the sequence is PPARGLGSSAT.

The protein belongs to the GHMP kinase family. Homoserine kinase subfamily.

It is found in the cytoplasm. The enzyme catalyses L-homoserine + ATP = O-phospho-L-homoserine + ADP + H(+). Its pathway is amino-acid biosynthesis; L-threonine biosynthesis; L-threonine from L-aspartate: step 4/5. Functionally, catalyzes the ATP-dependent phosphorylation of L-homoserine to L-homoserine phosphate. The polypeptide is Homoserine kinase (Prochlorococcus marinus (strain NATL2A)).